The primary structure comprises 229 residues: Potassium/proton antiporter CemA (229 aa).

4 helical membrane passes run 6–26 (AFIP…ISLC), 107–127 (IFHF…SFWG), 152–172 (FLIL…GWEL), and 189–209 (ILSG…KYWI).

Belongs to the CemA family.

The protein resides in the plastid. The protein localises to the chloroplast inner membrane. It catalyses the reaction K(+)(in) + H(+)(out) = K(+)(out) + H(+)(in). In terms of biological role, contributes to K(+)/H(+) antiport activity by supporting proton efflux to control proton extrusion and homeostasis in chloroplasts in a light-dependent manner to modulate photosynthesis. Prevents excessive induction of non-photochemical quenching (NPQ) under continuous-light conditions. Indirectly promotes efficient inorganic carbon uptake into chloroplasts. The polypeptide is Potassium/proton antiporter CemA (Aethionema grandiflorum (Persian stone-cress)).